The chain runs to 361 residues: Adenosine kinase (361 aa).

The Nuclear localization signal signature appears at 7–15; the sequence is PKPKKLKVE. An adenosine-binding site is contributed by Asp34. A Mg(2+)-binding site is contributed by Ser48. Tyr76 bears the Phosphotyrosine mark. Position 147 (Asn147) interacts with Mg(2+). Adenosine is bound at residue Gln305. Residue Asp316 is part of the active site. Asp316 functions as the Proton acceptor in the catalytic mechanism.

This sequence belongs to the carbohydrate kinase PfkB family. In terms of assembly, monomer. Requires Mg(2+) as cofactor. Widely expressed. Highly expressed in liver, testis, kidney and spleen (at protein level). In brain, expression in most forebrain structures and the cerebellum is higher than in the midbrain and brainstem (at protein level). As to expression, major isoform in testis and kidney. Not detected in most brain regions, except in the cerebellum, where it is expressed at a similar level to that of isoform 2 (at protein level). In terms of tissue distribution, major isoform in spleen and in most brain regions, except in the cerebellum, where it is expressed at a similar level to that of isoform 1 (at protein level).

The protein resides in the nucleus. It localises to the cytoplasm. The enzyme catalyses adenosine + ATP = AMP + ADP + H(+). It participates in purine metabolism; AMP biosynthesis via salvage pathway; AMP from adenosine: step 1/1. Its activity is regulated as follows. Activity is inhibited by 5-iodotubercidin and 5'-amino-5'-deoxyadenosine. Functionally, catalyzes the phosphorylation of the purine nucleoside adenosine at the 5' position in an ATP-dependent manner. Serves as a potential regulator of concentrations of extracellular adenosine and intracellular adenine nucleotides. This is Adenosine kinase (Adk) from Mus musculus (Mouse).